A 326-amino-acid polypeptide reads, in one-letter code: Putative F-box protein At3g22710 (326 aa).

The F-box domain occupies 1-50; it reads MTMPDLPPDLVEEILSRVPATSVKKLRSTCTQWNAIFKDERFTEKHFSKA.

This Arabidopsis thaliana (Mouse-ear cress) protein is Putative F-box protein At3g22710.